The sequence spans 126 residues: uncharacterized protein (126 aa).

Residues 13–45 (VAPKAGREEEQPPPPAGLGCGARGEPGRGPLEH) form a disordered region.

The protein resides in the cytoplasm. It localises to the cytoskeleton. The protein localises to the cilium basal body. This is an uncharacterized protein from Homo sapiens (Human).